The chain runs to 396 residues: Lipid-A-disaccharide synthase (396 aa).

Belongs to the LpxB family.

The catalysed reaction is a lipid X + a UDP-2-N,3-O-bis[(3R)-3-hydroxyacyl]-alpha-D-glucosamine = a lipid A disaccharide + UDP + H(+). It functions in the pathway bacterial outer membrane biogenesis; LPS lipid A biosynthesis. Condensation of UDP-2,3-diacylglucosamine and 2,3-diacylglucosamine-1-phosphate to form lipid A disaccharide, a precursor of lipid A, a phosphorylated glycolipid that anchors the lipopolysaccharide to the outer membrane of the cell. The chain is Lipid-A-disaccharide synthase from Nitrobacter winogradskyi (strain ATCC 25391 / DSM 10237 / CIP 104748 / NCIMB 11846 / Nb-255).